The following is a 192-amino-acid chain: Phosphoheptose isomerase (192 aa).

Positions 37–192 (LADSFKAGGK…IQLIEKEMVK (156 aa)) constitute an SIS domain. 52–54 (NGG) lines the substrate pocket. His61 and Glu65 together coordinate Zn(2+). Substrate is bound by residues Glu65, 93 to 94 (ND), 119 to 121 (STS), Ser124, and Gln172. Residues Gln172 and His180 each contribute to the Zn(2+) site.

Belongs to the SIS family. GmhA subfamily. As to quaternary structure, homotetramer. Zn(2+) serves as cofactor.

The protein localises to the cytoplasm. It carries out the reaction 2 D-sedoheptulose 7-phosphate = D-glycero-alpha-D-manno-heptose 7-phosphate + D-glycero-beta-D-manno-heptose 7-phosphate. The protein operates within carbohydrate biosynthesis; D-glycero-D-manno-heptose 7-phosphate biosynthesis; D-glycero-alpha-D-manno-heptose 7-phosphate and D-glycero-beta-D-manno-heptose 7-phosphate from sedoheptulose 7-phosphate: step 1/1. Its function is as follows. Catalyzes the isomerization of sedoheptulose 7-phosphate in D-glycero-D-manno-heptose 7-phosphate. This chain is Phosphoheptose isomerase, found in Shigella dysenteriae serotype 1 (strain Sd197).